The chain runs to 135 residues: uncharacterized protein (135 aa).

Residues 1–70 (MKPDWPRRGA…RWRPQGTGTG (70 aa)) are disordered.

This is an uncharacterized protein from Homo sapiens (Human).